The primary structure comprises 369 residues: Phospho-N-acetylmuramoyl-pentapeptide-transferase (369 aa).

10 helical membrane-spanning segments follow: residues 2 to 22 (IALLIGAGVALLVALIGTPLF), 55 to 75 (TVVVAAVLISYFVTHLIMWMM), 86 to 106 (GLLLLFLMVGMGFVGFLDDFI), 120 to 140 (AKLILQAAVGIIFAVLVLQFP), 163 to 183 (LAFGGTVVGAILFVLWSNLII), 196 to 216 (LDGLAAGASIMVFGAYTIMGI), 239 to 259 (PMDLALLAAILSAALVGFLWW), 266 to 286 (IFMGDTGSLAIGGAVAAFAIL), 291 to 311 (LLLAFIGGLFVLITLSVIIQV), and 348 to 368 (ILAGLFVAAGLGIFYAEWVVL).

It belongs to the glycosyltransferase 4 family. MraY subfamily. Mg(2+) is required as a cofactor.

Its subcellular location is the cell membrane. The catalysed reaction is UDP-N-acetyl-alpha-D-muramoyl-L-alanyl-gamma-D-glutamyl-meso-2,6-diaminopimeloyl-D-alanyl-D-alanine + di-trans,octa-cis-undecaprenyl phosphate = di-trans,octa-cis-undecaprenyl diphospho-N-acetyl-alpha-D-muramoyl-L-alanyl-D-glutamyl-meso-2,6-diaminopimeloyl-D-alanyl-D-alanine + UMP. The protein operates within cell wall biogenesis; peptidoglycan biosynthesis. In terms of biological role, catalyzes the initial step of the lipid cycle reactions in the biosynthesis of the cell wall peptidoglycan: transfers peptidoglycan precursor phospho-MurNAc-pentapeptide from UDP-MurNAc-pentapeptide onto the lipid carrier undecaprenyl phosphate, yielding undecaprenyl-pyrophosphoryl-MurNAc-pentapeptide, known as lipid I. This chain is Phospho-N-acetylmuramoyl-pentapeptide-transferase, found in Paenarthrobacter aurescens (strain TC1).